The following is a 423-amino-acid chain: MKAELIAVGTEILTGQIVNTNAQFLSEKMAELGIDVYFQTAVGDNEERLLSVITTASQRSNLVILCGGLGPTKDDLTKQTLAKYLRKDLVYDEQACQKLDDFFAKRKPSSRTPNNERQAQVIEGSIPLPNKTGLAVGGFITVDGISYVVLPGPPSELKPMVNEELVPLLSKQYSTLYSKVLRFFGIGESQLVTVLSDFIENQTDPTIAPYAKTGEVTLRLSTKTENQALADKKLGQLEAQLLSRKTLEGQPLADVFYGYGEDNSLARETFELLVKYDKTITAAESLTAGLFQSTLASFPGASQVFNGGFVTYSMEEKAKMLGLPLEELKSHGVVSAYTAEGMAEQARLLTGADIGVSLTGVAGPDMLEEQPAGTVFIGLATQNKVESIKVLISGRSRLDVRYIATLHAFNMVRKTLLKLENLL.

Belongs to the CinA family.

The chain is Putative competence-damage inducible protein from Streptococcus pyogenes serotype M1.